A 205-amino-acid polypeptide reads, in one-letter code: NADH-quinone oxidoreductase subunit J (205 aa).

5 consecutive transmembrane segments (helical) span residues M1–L21, V26–L46, L54–L74, L89–L109, and F142–T162.

It belongs to the complex I subunit 6 family.

Its subcellular location is the cell membrane. It catalyses the reaction a quinone + NADH + 5 H(+)(in) = a quinol + NAD(+) + 4 H(+)(out). Its function is as follows. NDH-1 shuttles electrons from NADH, via FMN and iron-sulfur (Fe-S) centers, to quinones in the respiratory chain. Couples the redox reaction to proton translocation (for every two electrons transferred, four hydrogen ions are translocated across the cytoplasmic membrane), and thus conserves the redox energy in a proton gradient. In Rickettsia typhi (strain ATCC VR-144 / Wilmington), this protein is NADH-quinone oxidoreductase subunit J (nuoJ).